Reading from the N-terminus, the 59-residue chain is Gonadotropin-releasing hormone receptor (59 aa).

Residues 1 to 2 (VA) lie on the Cytoplasmic side of the membrane. Residues 3 to 23 (FATSFTVCWTPYYVLGIWYWF) traverse the membrane as a helical segment. Residues 24–37 (DPEMLNRVSDPVNH) are Extracellular-facing. The helical transmembrane segment at 38 to 58 (FFFLFAFLNPCFDPLIYGYFS) threads the bilayer. Residue L59 is a topological domain, cytoplasmic.

Belongs to the G-protein coupled receptor 1 family.

The protein localises to the cell membrane. Receptor for gonadotropin releasing hormone (GnRH) that mediates the action of GnRH to stimulate the secretion of the gonadotropic hormones luteinizing hormone (LH) and follicle-stimulating hormone (FSH). This receptor mediates its action by association with G-proteins that activate a phosphatidylinositol-calcium second messenger system. The sequence is that of Gonadotropin-releasing hormone receptor (GNRHR) from Macaca mulatta (Rhesus macaque).